Here is a 381-residue protein sequence, read N- to C-terminus: Alkanesulfonate monooxygenase (381 aa).

Belongs to the SsuD family. Homotetramer.

The enzyme catalyses an alkanesulfonate + FMNH2 + O2 = an aldehyde + FMN + sulfite + H2O + 2 H(+). Functionally, catalyzes the desulfonation of aliphatic sulfonates. This chain is Alkanesulfonate monooxygenase, found in Escherichia coli O6:H1 (strain CFT073 / ATCC 700928 / UPEC).